Here is a 993-residue protein sequence, read N- to C-terminus: Importin subunit beta-5 (993 aa).

Residues 24–100 enclose the Importin N-terminal domain; sequence AELGLRDLEK…RETLLHLLVS (77 aa).

The protein localises to the nucleus. Its function is as follows. Required for nuclear protein import and mediates docking of import substrate to distinct nucleoporins. Serves a receptor for nuclear localization signals. Mediates the nuclear import of TATA-binding protein (TBP) and of histones H2A and H2B. This is Importin subunit beta-5 (kap114) from Schizosaccharomyces pombe (strain 972 / ATCC 24843) (Fission yeast).